Consider the following 159-residue polypeptide: Putative 4-hydroxy-4-methyl-2-oxoglutarate aldolase (159 aa).

Substrate-binding positions include 75–78 and arginine 97; that span reads GDQL. Aspartate 98 contacts a divalent metal cation.

The protein belongs to the class II aldolase/RraA-like family. Homotrimer. A divalent metal cation is required as a cofactor.

The catalysed reaction is 4-hydroxy-4-methyl-2-oxoglutarate = 2 pyruvate. The enzyme catalyses oxaloacetate + H(+) = pyruvate + CO2. Functionally, catalyzes the aldol cleavage of 4-hydroxy-4-methyl-2-oxoglutarate (HMG) into 2 molecules of pyruvate. Also contains a secondary oxaloacetate (OAA) decarboxylase activity due to the common pyruvate enolate transition state formed following C-C bond cleavage in the retro-aldol and decarboxylation reactions. The chain is Putative 4-hydroxy-4-methyl-2-oxoglutarate aldolase from Aromatoleum aromaticum (strain DSM 19018 / LMG 30748 / EbN1) (Azoarcus sp. (strain EbN1)).